Consider the following 245-residue polypeptide: 1-(5-phosphoribosyl)-5-[(5-phosphoribosylamino)methylideneamino] imidazole-4-carboxamide isomerase (245 aa).

Asp11 functions as the Proton acceptor in the catalytic mechanism. Residue Asp132 is the Proton donor of the active site.

Belongs to the HisA/HisF family.

Its subcellular location is the cytoplasm. It catalyses the reaction 1-(5-phospho-beta-D-ribosyl)-5-[(5-phospho-beta-D-ribosylamino)methylideneamino]imidazole-4-carboxamide = 5-[(5-phospho-1-deoxy-D-ribulos-1-ylimino)methylamino]-1-(5-phospho-beta-D-ribosyl)imidazole-4-carboxamide. The protein operates within amino-acid biosynthesis; L-histidine biosynthesis; L-histidine from 5-phospho-alpha-D-ribose 1-diphosphate: step 4/9. The polypeptide is 1-(5-phosphoribosyl)-5-[(5-phosphoribosylamino)methylideneamino] imidazole-4-carboxamide isomerase (Bacillus licheniformis (strain ATCC 14580 / DSM 13 / JCM 2505 / CCUG 7422 / NBRC 12200 / NCIMB 9375 / NCTC 10341 / NRRL NRS-1264 / Gibson 46)).